The following is a 143-amino-acid chain: 1,4-dihydroxy-2-naphthoyl-CoA hydrolase (143 aa).

The active site involves Asp-14.

The protein belongs to the 4-hydroxybenzoyl-CoA thioesterase family. DHNA-CoA hydrolase subfamily.

The enzyme catalyses 1,4-dihydroxy-2-naphthoyl-CoA + H2O = 1,4-dihydroxy-2-naphthoate + CoA + H(+). The protein operates within cofactor biosynthesis; phylloquinone biosynthesis. Its pathway is quinol/quinone metabolism; 1,4-dihydroxy-2-naphthoate biosynthesis; 1,4-dihydroxy-2-naphthoate from chorismate: step 7/7. In terms of biological role, catalyzes the hydrolysis of 1,4-dihydroxy-2-naphthoyl-CoA (DHNA-CoA) to 1,4-dihydroxy-2-naphthoate (DHNA), a reaction involved in phylloquinone (vitamin K1) biosynthesis. The chain is 1,4-dihydroxy-2-naphthoyl-CoA hydrolase from Gloeothece citriformis (strain PCC 7424) (Cyanothece sp. (strain PCC 7424)).